The primary structure comprises 328 residues: uncharacterized protein (328 aa).

This is an uncharacterized protein from Bacillus anthracis.